The following is a 369-amino-acid chain: NAD-dependent epimerase/dehydratase FUM13 (369 aa).

An NADP(+)-binding site is contributed by Y176.

It belongs to the NAD(P)-dependent epimerase/dehydratase family. Dihydroflavonol-4-reductase subfamily.

It functions in the pathway mycotoxin biosynthesis. Its function is as follows. NAD-dependent epimerase/dehydratase; part of the gene cluster that mediates the biosynthesis of fumonisins B1 (FB1), B2 (FB2), B3 (FB3), and B4 (FB4), which are carcinogenic mycotoxins. Within the pathway, FUM13 stereospecifically reduces the intermediate 3-keto intermediate 2-amino-3-oxo-12,16-dimethylicosane to the 3-hydroxyl product 2-amino-3-hydroxy-12,16-dimethylicosane. The biosynthesis starts with the FUM1-catalyzed carbon chain assembly from one molecule of acetyl-CoA, eight molecules of malonyl-CoA, and two molecules of methionine (in S-adenosyl form). The C18 polyketide chain is released from the enzyme by a nucleophilic attack of a carbanion, which is derived from R-carbon of alanine by decarboxylation, on the carbonyl carbon of polyketide acyl chain. This step is catalyzed by the pyridoxal 5'-phosphate-dependent aminoacyl transferase FUM8. The resultant 3-keto intermediate is then stereospecifically reduced to a 3-hydroxyl product by reductase FUM13. Subsequent oxidations at C-10 by the cytochrome P450 monooxygenase FUM2, C-14 and C-15 by FUM6, FUM12 or FUM15, tricarballylic esterification of the hydroxyl groups on C-14 and C-15 by acyltransferase FUM14, and C-5 hydroxylation by 2-keto-glutarate-dependent dioxygenase FUM3 furnish the biosynthesis of fumonisins. The tricarballylic moieties are most likely derived from the citric acid cycle, and their addition to the carbon backbone may involve FUM7, FUM10, FUM11 and FUM14. The protein is NAD-dependent epimerase/dehydratase FUM13 of Gibberella moniliformis (strain M3125 / FGSC 7600) (Maize ear and stalk rot fungus).